The following is a 591-amino-acid chain: L-fucose isomerase (591 aa).

Residues E337 and D361 each act as proton acceptor in the active site. E337, D361, and H528 together coordinate Mn(2+).

Belongs to the L-fucose isomerase family. In terms of assembly, homohexamer. The cofactor is Mn(2+).

It localises to the cytoplasm. The catalysed reaction is L-fucose = L-fuculose. Its pathway is carbohydrate degradation; L-fucose degradation; L-lactaldehyde and glycerone phosphate from L-fucose: step 1/3. Converts the aldose L-fucose into the corresponding ketose L-fuculose. In Klebsiella pneumoniae subsp. pneumoniae (strain ATCC 700721 / MGH 78578), this protein is L-fucose isomerase.